The following is a 432-amino-acid chain: MTNVVVVGSQWGDEGKGKIVDWLSERADIVVRYQGGHNAGHTLVIDGTSYKLSLLPSGVVRPGKMAVIGNGVVVDPHALIAEIGRLEAQGVTVTPDNLRIADNATLILSLHRELDAMREDAASNSGTKIGTTRRGIGPAYEDKVGRRAIRVMDLADLDSLSGKVDRILTHHNALRRGLGVAEVSHQAIMDELTSVADRVLPFRDTVWLFLDKERRKGSRILFEGAQGTLLDIDHGTYPFVTSSNTVAGQAAAGSGMGPGSLGYILGITKAYTTRVGEGPFPTELKDAIGEFLGEKGHEFGVVTGRKRRCGWFDAALVRQSIATNGITGIALTKLDVLDGLEELKICVGYMLDGEQIDHLPASQGAQARVEPIYITLEGWKESTVGARSWADLPAQAIKYVRQVEELIGAPVALLSTSPERDDTILVTDPFED.

GTP is bound by residues 12-18 and 40-42; these read GDEGKGK and GHT. Asp13 serves as the catalytic Proton acceptor. Mg(2+) contacts are provided by Asp13 and Gly40. IMP is bound by residues 13 to 16, 38 to 41, Thr132, Arg146, Gln226, Thr241, and Arg305; these read DEGK and NAGH. His41 functions as the Proton donor in the catalytic mechanism. 301–307 is a binding site for substrate; the sequence is VVTGRKR. GTP contacts are provided by residues Arg307, 333-335, and 415-417; these read KLD and STS.

It belongs to the adenylosuccinate synthetase family. As to quaternary structure, homodimer. Requires Mg(2+) as cofactor.

The protein localises to the cytoplasm. The enzyme catalyses IMP + L-aspartate + GTP = N(6)-(1,2-dicarboxyethyl)-AMP + GDP + phosphate + 2 H(+). Its pathway is purine metabolism; AMP biosynthesis via de novo pathway; AMP from IMP: step 1/2. Its function is as follows. Plays an important role in the de novo pathway of purine nucleotide biosynthesis. Catalyzes the first committed step in the biosynthesis of AMP from IMP. In Rhizobium johnstonii (strain DSM 114642 / LMG 32736 / 3841) (Rhizobium leguminosarum bv. viciae), this protein is Adenylosuccinate synthetase.